Reading from the N-terminus, the 254-residue chain is Gamma-glutamyl-gamma-aminobutyrate hydrolase (254 aa).

The 235-residue stretch at 16 to 250 folds into the Glutamine amidotransferase type-1 domain; it reads RNRLKGHATQ…ITAWQHHIAE (235 aa). Catalysis depends on cysteine 114, which acts as the Nucleophile. Catalysis depends on residues histidine 222 and glutamate 224.

It belongs to the peptidase C26 family.

It carries out the reaction 4-(gamma-L-glutamylamino)butanoate + H2O = 4-aminobutanoate + L-glutamate. Its pathway is amine and polyamine degradation; putrescine degradation; 4-aminobutanoate from putrescine: step 4/4. Its function is as follows. Involved in the breakdown of putrescine via hydrolysis of the gamma-glutamyl linkage of gamma-glutamyl-gamma-aminobutyrate. The chain is Gamma-glutamyl-gamma-aminobutyrate hydrolase (puuD) from Shigella flexneri.